The chain runs to 549 residues: E-selectin (549 aa).

The N-terminal stretch at 1-21 (MNASCFLSALTFVLLIGKSIA) is a signal peptide. Residues 22-139 (WYYNASSELM…CDKKKLALCY (118 aa)) form the C-type lectin domain. The Extracellular portion of the chain corresponds to 22–494 (WYYNASSELM…CEAPANPPRP (473 aa)). Residues Asn25 and Asn60 are each glycosylated (N-linked (GlcNAc...) asparagine). Cystine bridges form between Cys40–Cys138, Cys111–Cys130, Cys143–Cys154, Cys148–Cys163, Cys165–Cys174, Cys180–Cys225, Cys193–Cys206, Cys210–Cys238, Cys243–Cys287, Cys256–Cys269, Cys273–Cys300, Cys305–Cys350, Cys336–Cys363, Cys368–Cys413, Cys399–Cys426, Cys431–Cys472, and Cys458–Cys485. Ca(2+) contacts are provided by Glu101, Asn103, and Glu109. Residues 101–109 (EPNNKQRNE), 113–118 (EIYIQR), and 126–128 (NDE) contribute to the a carbohydrate site. Ca(2+) is bound by residues Asn126 and Asp127. One can recognise an EGF-like domain in the interval 140 to 175 (TASCTNTSCSGHGECVETINSYTCKCHPGFLGPKCD). Asn145 is a glycosylation site (N-linked (GlcNAc...) asparagine). Sushi domains lie at 178 to 240 (VTCQ…ACHV), 241 to 302 (VECK…SCKA), 303 to 365 (VTCD…VCKA), 366 to 428 (SQCE…TCAG), and 429 to 487 (VQCS…TCEA). N-linked (GlcNAc...) asparagine glycosylation is found at Asn192 and Asn203. Residue Asn266 is glycosylated (N-linked (GlcNAc...) asparagine). N-linked (GlcNAc...) asparagine glycans are attached at residues Asn313, Asn320, and Asn333. N-linked (GlcNAc...) asparagine glycans are attached at residues Asn441 and Asn465. A helical membrane pass occupies residues 495-516 (LVVALSVAATSLLTLSSLIYVL). Residues 517-549 (KRFFWKKAKKFVPASSCQSLQSFENYQGPSYII) lie on the Cytoplasmic side of the membrane.

It belongs to the selectin/LECAM family. Interacts with SELPLG/PSGL1 and PODXL2 through the sialyl Lewis X epitope. SELPLG sulfation appears not to be required for this interaction.

The protein localises to the cell membrane. Its function is as follows. Cell-surface glycoprotein having a role in immunoadhesion. Mediates in the adhesion of blood neutrophils in cytokine-activated endothelium through interaction with SELPLG/PSGL1. May have a role in capillary morphogenesis. The polypeptide is E-selectin (Sele) (Rattus norvegicus (Rat)).